The chain runs to 241 residues: Aspartate/glutamate leucyltransferase (241 aa).

This sequence belongs to the R-transferase family. Bpt subfamily.

The protein resides in the cytoplasm. The enzyme catalyses N-terminal L-glutamyl-[protein] + L-leucyl-tRNA(Leu) = N-terminal L-leucyl-L-glutamyl-[protein] + tRNA(Leu) + H(+). It catalyses the reaction N-terminal L-aspartyl-[protein] + L-leucyl-tRNA(Leu) = N-terminal L-leucyl-L-aspartyl-[protein] + tRNA(Leu) + H(+). Its function is as follows. Functions in the N-end rule pathway of protein degradation where it conjugates Leu from its aminoacyl-tRNA to the N-termini of proteins containing an N-terminal aspartate or glutamate. In Helicobacter hepaticus (strain ATCC 51449 / 3B1), this protein is Aspartate/glutamate leucyltransferase.